We begin with the raw amino-acid sequence, 172 residues long: MTPTQKDGPRSNQDIRVPCVQLINDEGQHQGVVATQEALAMAAEVGLDLVEIVPNTEPPVCKIIDLGKLKYQTQKKAAEIRKKQKVIEIKEIKMRPNVDVHDYEVKLKAIHRFIGNGDKVKITLRFRGREMAHQDLGLKLLQRVKEDTSEIAKIEAEPKLEGRQMMMVIAPK.

Belongs to the IF-3 family. As to quaternary structure, monomer.

It localises to the cytoplasm. Its function is as follows. IF-3 binds to the 30S ribosomal subunit and shifts the equilibrium between 70S ribosomes and their 50S and 30S subunits in favor of the free subunits, thus enhancing the availability of 30S subunits on which protein synthesis initiation begins. This Bartonella quintana (strain Toulouse) (Rochalimaea quintana) protein is Translation initiation factor IF-3.